A 385-amino-acid chain; its full sequence is MKVAYFDCFAGIAGDMTVAALIELGLPLEVLRQELAGLPFSGYTLESRKVERHGVAGTSFKVTLTEADQPHRHYSGIAKMIEASGLKPRVKELAQRIFRRLAEAEAAVHGVPLERVHFHEVGAVDSIVDIVGTAIGLDYLGVEALYASGLPYGRGFVQTAHGRLPVPAPATAELMEGIPLTADIGEGERVTPTGAAIIAALADGFGPPPPMTPLGTGYGAGEKDFPELPNLLRVLLGESTEAKGHQEVLVIETHIDDMNPEIFGFLMERLLEAGALDVAFSPLQMKKNRPATCLTVIADPADLEKLSAIVLSESTAIGLRYYPARRVTAARSLETRETTLGEVAVKVLETGRVTPEYDSCRRIALEKGIPLIEVYRTVERECGQA.

This sequence belongs to the LarC family.

The chain is Putative nickel insertion protein from Citrifermentans bemidjiense (strain ATCC BAA-1014 / DSM 16622 / JCM 12645 / Bem) (Geobacter bemidjiensis).